The primary structure comprises 491 residues: Lysine--tRNA ligase (491 aa).

Positions 399 and 406 each coordinate Mg(2+).

This sequence belongs to the class-II aminoacyl-tRNA synthetase family. Homodimer. Mg(2+) serves as cofactor.

It is found in the cytoplasm. It catalyses the reaction tRNA(Lys) + L-lysine + ATP = L-lysyl-tRNA(Lys) + AMP + diphosphate. In Chloroflexus aurantiacus (strain ATCC 29366 / DSM 635 / J-10-fl), this protein is Lysine--tRNA ligase.